The following is a 53-amino-acid chain: Antitoxin RelB3 (53 aa).

Forms heterodimers with RelE and possibly a heterotetramer RelE3-RelB3(2)-RelE3 from 2 heterodimers. The heterotetramer is probably not very stable in solution.

Antitoxin component of a type II toxin-antitoxin (TA) system. Probably neutralizes the toxic activity of cognate toxin RelE. The chain is Antitoxin RelB3 (relB3) from Methanocaldococcus jannaschii (strain ATCC 43067 / DSM 2661 / JAL-1 / JCM 10045 / NBRC 100440) (Methanococcus jannaschii).